The chain runs to 3013 residues: DmX-like protein 1 (3013 aa).

WD repeat units lie at residues 108–145 (FLDS…TEDE), 164–204 (KTAS…RPAV), and 227–275 (AHPR…NDCF). A phosphoserine mark is found at serine 322, serine 420, serine 423, and serine 434. The interval 418-442 (PSSEASVEDSIQADLKSDEELDDGV) is disordered. Residues 474 to 514 (DHQIEVLLSEWSKNADMLFSIHPMDGSLLVWHVDWLDEYQP) form a WD 4 repeat. Serine 572 is subject to Phosphoserine. WD repeat units follow at residues 578-619 (AHSK…ESAF) and 842-893 (KKRL…TPVS). Serine 916 and serine 922 each carry phosphoserine. WD repeat units lie at residues 970–1008 (HLSS…GESA), 1145–1193 (EDGS…PLSK), and 1208–1248 (GAPP…EPVI). Residues serine 1829, serine 1896, serine 1903, and serine 1965 each carry the phosphoserine modification. Disordered stretches follow at residues 2364 to 2406 (GQAN…PPAV) and 2431 to 2462 (QSRA…GLQL). Over residues 2385–2398 (SKVSARESPVSSSS) the composition is skewed to low complexity. Acidic residues predominate over residues 2437–2455 (DSEESLESDDEEEEDDDDA). WD repeat units follow at residues 2728–2769 (KAIN…TCFR), 2771–2810 (GGNS…CPVT), 2822–2864 (CHNK…ANSL), 2870–2909 (CHDS…QRQL), 2912–2951 (SHDS…LLHT), and 2964–3002 (NIGT…SPLN).

This chain is DmX-like protein 1 (Dmxl1), found in Mus musculus (Mouse).